The following is a 147-amino-acid chain: Transcriptional repressor NrdR (147 aa).

A zinc finger lies at 3–34 (CPFCGHEDTQVAETRESDEGDVIRRRRRCPSC). Positions 49–139 (PAIVKKDGSR…VYRSFEGVDE (91 aa)) constitute an ATP-cone domain.

The protein belongs to the NrdR family. Zn(2+) is required as a cofactor.

Its function is as follows. Negatively regulates transcription of bacterial ribonucleotide reductase nrd genes and operons by binding to NrdR-boxes. The polypeptide is Transcriptional repressor NrdR (Methylibium petroleiphilum (strain ATCC BAA-1232 / LMG 22953 / PM1)).